We begin with the raw amino-acid sequence, 505 residues long: Lysine--tRNA ligase (505 aa).

Mg(2+)-binding residues include Glu-415 and Glu-422.

It belongs to the class-II aminoacyl-tRNA synthetase family. Homodimer. It depends on Mg(2+) as a cofactor.

Its subcellular location is the cytoplasm. The enzyme catalyses tRNA(Lys) + L-lysine + ATP = L-lysyl-tRNA(Lys) + AMP + diphosphate. This is Lysine--tRNA ligase from Yersinia pseudotuberculosis serotype O:1b (strain IP 31758).